We begin with the raw amino-acid sequence, 347 residues long: Isopentenyl-diphosphate delta-isomerase (347 aa).

Residue 9-10 (RK) coordinates substrate. FMN is bound by residues 65 to 67 (AMT), S95, and N124. Residue 95-97 (STH) coordinates substrate. Position 154 (Q154) interacts with substrate. E155 is a Mg(2+) binding site. Residues K186, S211, T216, 262–264 (GVR), and 283–284 (SR) each bind FMN.

It belongs to the IPP isomerase type 2 family. In terms of assembly, homooctamer. Dimer of tetramers. FMN serves as cofactor. Requires NADPH as cofactor. Mg(2+) is required as a cofactor.

Its subcellular location is the cytoplasm. It catalyses the reaction isopentenyl diphosphate = dimethylallyl diphosphate. In terms of biological role, involved in the biosynthesis of isoprenoids. Catalyzes the 1,3-allylic rearrangement of the homoallylic substrate isopentenyl (IPP) to its allylic isomer, dimethylallyl diphosphate (DMAPP). The sequence is that of Isopentenyl-diphosphate delta-isomerase from Staphylococcus saprophyticus subsp. saprophyticus (strain ATCC 15305 / DSM 20229 / NCIMB 8711 / NCTC 7292 / S-41).